Reading from the N-terminus, the 174-residue chain is Centrosomal protein 20 (174 aa).

The necessary and sufficient for homooligomerization and localization to centrosomes and pericentriolar satellites stretch occupies residues 1–104; sequence MATVAELKAV…AFEESKDNTI (104 aa). One can recognise a LisH domain in the interval 49–81; that stretch reads ENLLINELIREYLEFNKYKYTASVLIAESGQPV. A disordered region spans residues 129–174; it reads GPSLQPSDPSLGRQPSRRKPMDDHLRKEEQKSTNIEDLHVSQAVNR. Residue S144 is modified to Phosphoserine. Residues 147 to 167 show a composition bias toward basic and acidic residues; sequence KPMDDHLRKEEQKSTNIEDLH.

Belongs to the CEP43 family. In terms of assembly, homooligomer; probably required for localization to centrosomes. Forms a complex with KIAA0753/OFIP and OFD1; within this complex may stabilize the interaction between OFD1 and KIAA0753/OFIP. Interacts with PCM1; this interaction may be mediated by KIAA0753/OFIP. Interacts with PLK1 in later G1, S, G2 and M phases of the cell cycle; this interaction recruits PLK1 to centrosomes. Widely expressed. Detected in brain, heart, kidney, liver, lung, skeletal muscle, placenta and intestine.

It is found in the cytoplasm. It localises to the cytoskeleton. The protein resides in the microtubule organizing center. The protein localises to the centrosome. Its subcellular location is the centriole. It is found in the cell projection. It localises to the cilium. The protein resides in the cilium basal body. The protein localises to the cytoplasmic granule. Its subcellular location is the centriolar satellite. Functionally, involved in the biogenesis of cilia. Required for the recruitment of PLK1 to centrosomes and S phase progression. This chain is Centrosomal protein 20, found in Homo sapiens (Human).